A 336-amino-acid chain; its full sequence is Holliday junction branch migration complex subunit RuvB (336 aa).

The interval 2-186 (QDQEEERMIT…FGVICKLELY (185 aa)) is large ATPase domain (RuvB-L). Residues Leu-25, Arg-26, Gly-67, Lys-70, Thr-71, Thr-72, 133–135 (EDF), Arg-176, Tyr-186, and Arg-223 contribute to the ATP site. Residue Thr-71 coordinates Mg(2+). Residues 187–257 (NNKQLTAIVK…VAEEALILLE (71 aa)) are small ATPAse domain (RuvB-S). The head domain (RuvB-H) stretch occupies residues 260 to 336 (SLGLDNTDKK…YEHFNIPSAE (77 aa)). DNA is bound by residues Arg-296, Arg-315, and Arg-320.

This sequence belongs to the RuvB family. In terms of assembly, homohexamer. Forms an RuvA(8)-RuvB(12)-Holliday junction (HJ) complex. HJ DNA is sandwiched between 2 RuvA tetramers; dsDNA enters through RuvA and exits via RuvB. An RuvB hexamer assembles on each DNA strand where it exits the tetramer. Each RuvB hexamer is contacted by two RuvA subunits (via domain III) on 2 adjacent RuvB subunits; this complex drives branch migration. In the full resolvosome a probable DNA-RuvA(4)-RuvB(12)-RuvC(2) complex forms which resolves the HJ.

It localises to the cytoplasm. The enzyme catalyses ATP + H2O = ADP + phosphate + H(+). Functionally, the RuvA-RuvB-RuvC complex processes Holliday junction (HJ) DNA during genetic recombination and DNA repair, while the RuvA-RuvB complex plays an important role in the rescue of blocked DNA replication forks via replication fork reversal (RFR). RuvA specifically binds to HJ cruciform DNA, conferring on it an open structure. The RuvB hexamer acts as an ATP-dependent pump, pulling dsDNA into and through the RuvAB complex. RuvB forms 2 homohexamers on either side of HJ DNA bound by 1 or 2 RuvA tetramers; 4 subunits per hexamer contact DNA at a time. Coordinated motions by a converter formed by DNA-disengaged RuvB subunits stimulates ATP hydrolysis and nucleotide exchange. Immobilization of the converter enables RuvB to convert the ATP-contained energy into a lever motion, pulling 2 nucleotides of DNA out of the RuvA tetramer per ATP hydrolyzed, thus driving DNA branch migration. The RuvB motors rotate together with the DNA substrate, which together with the progressing nucleotide cycle form the mechanistic basis for DNA recombination by continuous HJ branch migration. Branch migration allows RuvC to scan DNA until it finds its consensus sequence, where it cleaves and resolves cruciform DNA. This chain is Holliday junction branch migration complex subunit RuvB, found in Alkaliphilus metalliredigens (strain QYMF).